A 504-amino-acid polypeptide reads, in one-letter code: Amyloid-beta A4 precursor protein-binding family B member 3 (504 aa).

The WW domain occupies 29 to 61 (TGLPPGWRKIRDAAGTYYWHVPSGSTQWQRPTW). PID domains are found at residues 111 to 278 (EPGA…QVEL) and 283 to 438 (SQAA…RTSS).

In terms of assembly, interacts with APP (via intracellular domain). Interacts with APLP1 and APLP2 (via intracellular domain). In terms of tissue distribution, expressed predominantly in brain and testis.

Its subcellular location is the cytoplasm. It is found in the nucleus. Functionally, may modulate the internalization of amyloid-beta precursor protein. The sequence is that of Amyloid-beta A4 precursor protein-binding family B member 3 from Rattus norvegicus (Rat).